Here is a 149-residue protein sequence, read N- to C-terminus: Protegrin-3 (149 aa).

The N-terminal stretch at 1–29 is a signal peptide; sequence METQRASLCLGRWSLWLLLLALVVPSASA. Positions 30–130 are excised as a propeptide; sequence QALSYREAVL…DITCNEVQGV (101 aa). A disordered region spans residues 61-80; it reads DQPPKADEDPGTPKPVSFTV. Cystine bridges form between C85/C96, C107/C124, C136/C145, and C138/C143. Arginine amide is present on R148.

It belongs to the cathelicidin family.

The protein localises to the secreted. Its function is as follows. Microbicidal activity. Active against E.coli, Listeria monocytogenes and C.albicans, in vitro. The sequence is that of Protegrin-3 (NPG3) from Sus scrofa (Pig).